The primary structure comprises 424 residues: Serine/threonine-protein kinase H1 (424 aa).

Residue G2 is the site of N-myristoyl glycine attachment. C3 is lipidated: S-palmitoyl cysteine. The disordered stretch occupies residues 49-81 (KGGFPAASQGANPSPGTPRTSHTEPPSEPPRRA). Over residues 57 to 72 (QGANPSPGTPRTSHTE) the composition is skewed to polar residues. The Protein kinase domain maps to 98 to 355 (YDIKALIGRG…ALQALRHPWV (258 aa)). Residues 104-112 (IGRGSFSRV) and K127 each bind ATP. D218 (proton acceptor) is an active-site residue. Positions 378–407 (RASSRCQSTKSAQSTRSSRSTRSNKSRRVR) are disordered. Phosphoserine; by autocatalysis is present on residues S380 and S381. Over residues 385–398 (STKSAQSTRSSRST) the composition is skewed to low complexity.

It belongs to the protein kinase superfamily. CAMK Ser/Thr protein kinase family. In terms of assembly, homodimer. In terms of processing, autophosphorylated on serine residues. Myristoylated. Required for membrane association. Prerequisite for palmitoylation to occur. Post-translationally, palmitoylated.

It localises to the golgi apparatus. The protein resides in the cytoplasm. The protein localises to the cytoskeleton. It is found in the microtubule organizing center. Its subcellular location is the centrosome. It localises to the nucleus speckle. The protein resides in the endoplasmic reticulum membrane. The protein localises to the cell membrane. The enzyme catalyses L-seryl-[protein] + ATP = O-phospho-L-seryl-[protein] + ADP + H(+). The catalysed reaction is L-threonyl-[protein] + ATP = O-phospho-L-threonyl-[protein] + ADP + H(+). Its activity is regulated as follows. Activity depends on Ca(2+) concentration. Its function is as follows. May be a SFC-associated serine kinase (splicing factor compartment-associated serine kinase) with a role in intranuclear SR protein (non-snRNP splicing factors containing a serine/arginine-rich domain) trafficking and pre-mRNA processing. The protein is Serine/threonine-protein kinase H1 (PSKH1) of Bos taurus (Bovine).